Consider the following 450-residue polypeptide: UDP-N-acetylmuramoylalanine--D-glutamate ligase (450 aa).

116–122 (GSNGKTT) contributes to the ATP binding site.

Belongs to the MurCDEF family.

It is found in the cytoplasm. It catalyses the reaction UDP-N-acetyl-alpha-D-muramoyl-L-alanine + D-glutamate + ATP = UDP-N-acetyl-alpha-D-muramoyl-L-alanyl-D-glutamate + ADP + phosphate + H(+). The protein operates within cell wall biogenesis; peptidoglycan biosynthesis. Its function is as follows. Cell wall formation. Catalyzes the addition of glutamate to the nucleotide precursor UDP-N-acetylmuramoyl-L-alanine (UMA). This Dechloromonas aromatica (strain RCB) protein is UDP-N-acetylmuramoylalanine--D-glutamate ligase.